A 213-amino-acid chain; its full sequence is Major fimbrial subunit (213 aa).

Positions 1 to 20 are cleaved as a signal peptide; the sequence is MKKTLLGSLILLAFAGNVQA. A disulfide bond links Cys41 and Cys81.

Belongs to the fimbrial protein family.

It localises to the fimbrium. In terms of biological role, mediates adherence to oropharyngeal epithelial cells. Helps the airway colonization process. This is Major fimbrial subunit (hifA) from Haemophilus influenzae.